The chain runs to 437 residues: Lipid II isoglutaminyl synthase (glutamine-hydrolyzing) subunit MurT (437 aa).

Residues Cys202, Cys205, Cys224, and Cys226 each contribute to the Zn(2+) site. Residue Asp349 is part of the active site.

The protein belongs to the MurCDEF family. MurT subfamily. As to quaternary structure, forms a heterodimer with GatD.

The enzyme catalyses beta-D-GlcNAc-(1-&gt;4)-Mur2Ac(oyl-L-Ala-gamma-D-Glu-L-Lys-D-Ala-D-Ala)-di-trans,octa-cis-undecaprenyl diphosphate + L-glutamine + ATP + H2O = beta-D-GlcNAc-(1-&gt;4)-Mur2Ac(oyl-L-Ala-D-isoglutaminyl-L-Lys-D-Ala-D-Ala)-di-trans,octa-cis-undecaprenyl diphosphate + L-glutamate + ADP + phosphate + H(+). It catalyses the reaction beta-D-GlcNAc-(1-&gt;4)-Mur2Ac(oyl-L-Ala-gamma-D-Glu-L-Lys-D-Ala-D-Ala)-di-trans,octa-cis-undecaprenyl diphosphate + ATP = beta-D-GlcNAc-(1-&gt;4)-Mur2Ac(oyl-L-Ala-gamma-D-O-P-Glu-L-Lys-D-Ala-D-Ala)-di-trans,octa-cis-undecaprenyl diphosphate + ADP. The catalysed reaction is beta-D-GlcNAc-(1-&gt;4)-Mur2Ac(oyl-L-Ala-gamma-D-O-P-Glu-L-Lys-D-Ala-D-Ala)-di-trans,octa-cis-undecaprenyl diphosphate + NH4(+) = beta-D-GlcNAc-(1-&gt;4)-Mur2Ac(oyl-L-Ala-D-isoglutaminyl-L-Lys-D-Ala-D-Ala)-di-trans,octa-cis-undecaprenyl diphosphate + phosphate + H(+). It functions in the pathway cell wall biogenesis; peptidoglycan biosynthesis. Functionally, the lipid II isoglutaminyl synthase complex catalyzes the formation of alpha-D-isoglutamine in the cell wall lipid II stem peptide. The MurT subunit catalyzes the ATP-dependent amidation of D-glutamate residue of lipid II, converting it to an isoglutamine residue. This Staphylococcus aureus (strain N315) protein is Lipid II isoglutaminyl synthase (glutamine-hydrolyzing) subunit MurT.